Reading from the N-terminus, the 284-residue chain is Tropomyosin-2 (284 aa).

Residues 1 to 284 adopt a coiled-coil conformation; it reads MDAIKKKMQA…DQTFAELTGY (284 aa). A disordered region spans residues 82–110; the sequence is ESEVATQNRKVQQIEEDLEKSEERSTTAQ.

Belongs to the tropomyosin family. Homodimer.

Its function is as follows. Tropomyosin, in association with the troponin complex, plays a central role in the calcium dependent regulation of muscle contraction. May also regulate motor systems required to maintain nuclear integrity and apico-basal polarity during embryogenesis. This chain is Tropomyosin-2 (Tm2), found in Drosophila melanogaster (Fruit fly).